The sequence spans 428 residues: C4-dicarboxylate transport protein (428 aa).

The next 9 helical transmembrane spans lie at 8–28 (SLYF…HFYP), 44–64 (LIKM…IAGM), 76–96 (VALL…LVIV), 142–162 (IGAF…LFGF), 184–204 (VIFG…FGAM), 222–242 (LIVC…GSIA), 289–309 (VVGL…SIYL), 326–346 (IFHQ…AAGV), and 352–372 (IVLA…LALI).

The protein belongs to the dicarboxylate/amino acid:cation symporter (DAACS) (TC 2.A.23) family.

It localises to the cell inner membrane. Responsible for the transport of dicarboxylates such as succinate, fumarate, and malate from the periplasm across the membrane. In Cronobacter sakazakii (strain ATCC BAA-894) (Enterobacter sakazakii), this protein is C4-dicarboxylate transport protein.